Reading from the N-terminus, the 276-residue chain is Diaminopimelate epimerase (276 aa).

Residues asparagine 13, glutamine 46, and asparagine 66 each coordinate substrate. Cysteine 75 functions as the Proton donor in the catalytic mechanism. Substrate is bound by residues 76–77 (GN), asparagine 159, asparagine 192, and 210–211 (ER). The Proton acceptor role is filled by cysteine 219. 220–221 (GT) lines the substrate pocket.

It belongs to the diaminopimelate epimerase family. As to quaternary structure, homodimer.

The protein resides in the cytoplasm. The catalysed reaction is (2S,6S)-2,6-diaminopimelate = meso-2,6-diaminopimelate. It participates in amino-acid biosynthesis; L-lysine biosynthesis via DAP pathway; DL-2,6-diaminopimelate from LL-2,6-diaminopimelate: step 1/1. Functionally, catalyzes the stereoinversion of LL-2,6-diaminopimelate (L,L-DAP) to meso-diaminopimelate (meso-DAP), a precursor of L-lysine and an essential component of the bacterial peptidoglycan. This Pseudomonas syringae pv. tomato (strain ATCC BAA-871 / DC3000) protein is Diaminopimelate epimerase.